The following is a 260-amino-acid chain: Glucosamine-6-phosphate deaminase (260 aa).

The active-site Proton acceptor; for enolization step is Asp67. Asp136 acts as the For ring-opening step in catalysis. The active-site Proton acceptor; for ring-opening step is His138. Residue Glu143 is the For ring-opening step of the active site.

The protein belongs to the glucosamine/galactosamine-6-phosphate isomerase family. NagB subfamily.

The enzyme catalyses alpha-D-glucosamine 6-phosphate + H2O = beta-D-fructose 6-phosphate + NH4(+). It functions in the pathway amino-sugar metabolism; N-acetylneuraminate degradation; D-fructose 6-phosphate from N-acetylneuraminate: step 5/5. Functionally, catalyzes the reversible isomerization-deamination of glucosamine 6-phosphate (GlcN6P) to form fructose 6-phosphate (Fru6P) and ammonium ion. This chain is Glucosamine-6-phosphate deaminase, found in Arthrobacter sp. (strain FB24).